The primary structure comprises 134 residues: Cytochrome b5 (134 aa).

Ala-2 bears the N-acetylalanine mark. N6-acetyllysine is present on residues Lys-7, Lys-10, and Lys-19. The region spanning 9-85 is the Cytochrome b5 heme-binding domain; it reads VKYYTLEEIQ…SKTFIIGELH (77 aa). Heme is bound by residues His-44 and His-68. A helical transmembrane segment spans residues 109-131; that stretch reads WWTNWVIPAISALVVSLMYHFYT.

This sequence belongs to the cytochrome b5 family.

Its subcellular location is the endoplasmic reticulum membrane. The protein localises to the microsome membrane. It is found in the cytoplasm. In terms of biological role, cytochrome b5 is a membrane-bound hemoprotein functioning as an electron carrier for several membrane-bound oxygenases. The polypeptide is Cytochrome b5 (CYB5A) (Sus scrofa (Pig)).